Consider the following 130-residue polypeptide: Methylglyoxal synthase (130 aa).

Residues Met-1–Cys-130 form the MGS-like domain. Residues His-11, Lys-15, Thr-37–Thr-40, and Ser-57–Gly-58 each bind substrate. Asp-63 serves as the catalytic Proton donor/acceptor. His-90 is a binding site for substrate.

Belongs to the methylglyoxal synthase family.

It carries out the reaction dihydroxyacetone phosphate = methylglyoxal + phosphate. Functionally, catalyzes the formation of methylglyoxal from dihydroxyacetone phosphate. This is Methylglyoxal synthase from Burkholderia cenocepacia (strain HI2424).